A 74-amino-acid polypeptide reads, in one-letter code: UPF0435 protein GWCH70_0415 (74 aa).

It belongs to the UPF0435 family.

The polypeptide is UPF0435 protein GWCH70_0415 (Geobacillus sp. (strain WCH70)).